Reading from the N-terminus, the 123-residue chain is Small ribosomal subunit protein uS12 (123 aa).

Asp89 carries the post-translational modification 3-methylthioaspartic acid.

Belongs to the universal ribosomal protein uS12 family. As to quaternary structure, part of the 30S ribosomal subunit. Contacts proteins S8 and S17. May interact with IF1 in the 30S initiation complex.

In terms of biological role, with S4 and S5 plays an important role in translational accuracy. Its function is as follows. Interacts with and stabilizes bases of the 16S rRNA that are involved in tRNA selection in the A site and with the mRNA backbone. Located at the interface of the 30S and 50S subunits, it traverses the body of the 30S subunit contacting proteins on the other side and probably holding the rRNA structure together. The combined cluster of proteins S8, S12 and S17 appears to hold together the shoulder and platform of the 30S subunit. This chain is Small ribosomal subunit protein uS12, found in Anaeromyxobacter sp. (strain Fw109-5).